Reading from the N-terminus, the 336-residue chain is tRNA N6-adenosine threonylcarbamoyltransferase (336 aa).

Fe cation contacts are provided by H114 and H118. Substrate-binding positions include 136-140 (LVSGG), D169, G182, D186, and N275. A Fe cation-binding site is contributed by D301.

Belongs to the KAE1 / TsaD family. Fe(2+) is required as a cofactor.

Its subcellular location is the cytoplasm. The enzyme catalyses L-threonylcarbamoyladenylate + adenosine(37) in tRNA = N(6)-L-threonylcarbamoyladenosine(37) in tRNA + AMP + H(+). Its function is as follows. Required for the formation of a threonylcarbamoyl group on adenosine at position 37 (t(6)A37) in tRNAs that read codons beginning with adenine. Is involved in the transfer of the threonylcarbamoyl moiety of threonylcarbamoyl-AMP (TC-AMP) to the N6 group of A37, together with TsaE and TsaB. TsaD likely plays a direct catalytic role in this reaction. This is tRNA N6-adenosine threonylcarbamoyltransferase from Streptococcus mutans serotype c (strain ATCC 700610 / UA159).